A 103-amino-acid polypeptide reads, in one-letter code: Protamine-2 (103 aa).

Residues 1-103 (MVRYRMRSLS…RTRRRRCRRY (103 aa)) form a disordered region. Residues serine 8 and serine 10 each carry the phosphoserine modification. Over residues 8 to 17 (SLSERPHEVH) the composition is skewed to basic and acidic residues. Residues 23–35 (GQEQGHNGQEEQG) are compositionally biased toward low complexity. At serine 37 the chain carries Phosphoserine. Basic and acidic residues predominate over residues 39–48 (EHVEVYERTH). The span at 51 to 103 (YSHHRRRRCSRRRLYRIHRRRHRSCRRRRRRSCRHRRRHRRGCRTRRRRCRRY) shows a compositional bias: basic residues.

Belongs to the protamine P2 family. As to quaternary structure, interacts with TDRP. Proteolytic processing into mature chains is required for histone eviction during spermatogenesis. Transition proteins (TNP1 and TNP2) are required for processing. Testis.

The protein localises to the nucleus. It localises to the chromosome. Protamines substitute for histones in the chromatin of sperm during the haploid phase of spermatogenesis. They compact sperm DNA into a highly condensed, stable and inactive complex. The polypeptide is Protamine-2 (PRM2) (Semnopithecus entellus (Northern plains gray langur)).